The sequence spans 235 residues: Golgi to ER traffic protein 1 (235 aa).

Met1 is a topological domain (lumenal). Residues 2 to 21 (HWAAAVAIFFIVVTKFLQYT) form a helical membrane-spanning segment. At 22–104 (NKYHEKWISK…AFQAHLHKLR (83 aa)) the chain is on the cytoplasmic side. The stretch at 68 to 104 (WTKNNRKLDSLDKEINNLKDEIQSENKAFQAHLHKLR) forms a coiled coil. Residues 105-125 (LLALTVPFFVFKIMYGKTPVY) traverse the membrane as a helical segment. At 126–181 (KLSSSTSTLFPTFVSGVWSQGWLYVLLHPLRTISQKWHIMEGKFGASKFDDMALQS) the chain is on the lumenal side. The helical transmembrane segment at 182–198 (VSLGIWVWALMNVINGV) threads the bilayer. Over 199–235 (EFIVKQLFLTPKMEAPASVETQEEKALDAVDDAIILD) the chain is Cytoplasmic.

This sequence belongs to the WRB/GET1 family. In terms of assembly, component of the Golgi to ER traffic (GET) complex, which is composed of GET1, GET2 and GET3. Within the complex, GET1 and GET2 form a heterotetramer which is stabilized by phosphatidylinositol binding and which binds to the GET3 homodimer.

Its subcellular location is the endoplasmic reticulum membrane. It is found in the golgi apparatus membrane. Functionally, required for the post-translational delivery of tail-anchored (TA) proteins to the endoplasmic reticulum. Together with GET2, acts as a membrane receptor for soluble GET3, which recognizes and selectively binds the transmembrane domain of TA proteins in the cytosol. The GET complex cooperates with the HDEL receptor ERD2 to mediate the ATP-dependent retrieval of resident ER proteins that contain a C-terminal H-D-E-L retention signal from the Golgi to the ER. The sequence is that of Golgi to ER traffic protein 1 from Saccharomyces cerevisiae (strain RM11-1a) (Baker's yeast).